A 245-amino-acid chain; its full sequence is 1-(5-phosphoribosyl)-5-[(5-phosphoribosylamino)methylideneamino] imidazole-4-carboxamide isomerase (245 aa).

Asp-8 (proton acceptor) is an active-site residue. The Proton donor role is filled by Asp-131.

The protein belongs to the HisA/HisF family.

It localises to the cytoplasm. It carries out the reaction 1-(5-phospho-beta-D-ribosyl)-5-[(5-phospho-beta-D-ribosylamino)methylideneamino]imidazole-4-carboxamide = 5-[(5-phospho-1-deoxy-D-ribulos-1-ylimino)methylamino]-1-(5-phospho-beta-D-ribosyl)imidazole-4-carboxamide. It participates in amino-acid biosynthesis; L-histidine biosynthesis; L-histidine from 5-phospho-alpha-D-ribose 1-diphosphate: step 4/9. This Neisseria meningitidis serogroup C / serotype 2a (strain ATCC 700532 / DSM 15464 / FAM18) protein is 1-(5-phosphoribosyl)-5-[(5-phosphoribosylamino)methylideneamino] imidazole-4-carboxamide isomerase.